We begin with the raw amino-acid sequence, 153 residues long: Proline-rich membrane anchor 1 (153 aa).

Residues 1 to 35 (MLLRDLVLRHGCCWPSLLLHCALHPLWGLVQVTHA) form the signal peptide. Topologically, residues 36–92 (EPQKSCSKVTDSCQHICQCRPPPPLPPPPPPPPPPRLLSAPAPNSTSCPAEDSWWSG) are extracellular. The PRAD domain occupies 56–70 (PPPPLPPPPPPPPPP). Positions 59 to 71 (PLPPPPPPPPPPR) are enriched in pro residues. The interval 59-79 (PLPPPPPPPPPPRLLSAPAPN) is disordered. An N-linked (GlcNAc...) asparagine glycan is attached at N79. The helical transmembrane segment at 93–113 (LVIIVAVVCASLVFLTVLVII) threads the bilayer. Residues 114 to 153 (CYKAIKRKPLRKDENGASVAEYPMSSSPSNKGVDVNAAVV) are Cytoplasmic-facing. The tract at residues 133–153 (AEYPMSSSPSNKGVDVNAAVV) is disordered.

Interacts with ACHE, probably through disulfide bonds. Isoforms 1 and 2 are expressed in the adult brain. In matured cortical neurons, only isoform 1 is detectable.

It is found in the cell membrane. The protein localises to the cell junction. Its subcellular location is the synapse. Its function is as follows. Required to anchor acetylcholinesterase (ACHE) to the basal lamina of the neuromuscular junction and to the membrane of neuronal synapses in brain. Organizes ACHE into tetramers. This Rattus norvegicus (Rat) protein is Proline-rich membrane anchor 1 (Prima1).